We begin with the raw amino-acid sequence, 60 residues long: Cytotoxin 7 (60 aa).

Intrachain disulfides connect cysteine 3/cysteine 21, cysteine 14/cysteine 38, cysteine 42/cysteine 53, and cysteine 54/cysteine 59.

It belongs to the three-finger toxin family. Short-chain subfamily. Type IA cytotoxin sub-subfamily. In terms of assembly, monomer in solution; Homodimer and oligomer in the presence of negatively charged lipids forming a pore with a size ranging between 20 and 30 Angstroms. Expressed by the venom gland.

It is found in the secreted. Its subcellular location is the target cell membrane. Shows cytolytic activity on many different cells by forming pore in lipid membranes. In vivo, increases heart rate or kills the animal by cardiac arrest. In addition, it binds to heparin with high affinity, interacts with Kv channel-interacting protein 1 (KCNIP1) in a calcium-independent manner, and binds to integrin alpha-V/beta-3 (ITGAV/ITGB3) with moderate affinity. In Naja annulifera (Banded Egyptian cobra), this protein is Cytotoxin 7.